An 88-amino-acid polypeptide reads, in one-letter code: UPF0250 protein bbp_432 (88 aa).

This sequence belongs to the UPF0250 family.

The chain is UPF0250 protein bbp_432 from Buchnera aphidicola subsp. Baizongia pistaciae (strain Bp).